The sequence spans 768 residues: 5-methyltetrahydropteroyltriglutamate--homocysteine methyltransferase (768 aa).

Residues 17 to 20 (REWK) and K113 each bind 5-methyltetrahydropteroyltri-L-glutamate. Residues 440–442 (IGS) and E493 contribute to the L-homocysteine site. L-methionine contacts are provided by residues 440-442 (IGS) and E493. W570 serves as a coordination point for 5-methyltetrahydropteroyltri-L-glutamate. Position 608 (D608) interacts with L-homocysteine. D608 is an L-methionine binding site. E614 serves as a coordination point for 5-methyltetrahydropteroyltri-L-glutamate. Zn(2+) is bound by residues H650, C652, and E674. Catalysis depends on H703, which acts as the Proton donor. C735 is a Zn(2+) binding site.

The protein belongs to the vitamin-B12 independent methionine synthase family. Requires Zn(2+) as cofactor.

It catalyses the reaction 5-methyltetrahydropteroyltri-L-glutamate + L-homocysteine = tetrahydropteroyltri-L-glutamate + L-methionine. It functions in the pathway amino-acid biosynthesis; L-methionine biosynthesis via de novo pathway; L-methionine from L-homocysteine (MetE route): step 1/1. Functionally, catalyzes the transfer of a methyl group from 5-methyltetrahydrofolate to homocysteine resulting in methionine formation. The protein is 5-methyltetrahydropteroyltriglutamate--homocysteine methyltransferase of Lactiplantibacillus plantarum (strain ATCC BAA-793 / NCIMB 8826 / WCFS1) (Lactobacillus plantarum).